The primary structure comprises 224 residues: Phosphoribosylformylglycinamidine synthase subunit PurQ (224 aa).

A Glutamine amidotransferase type-1 domain is found at 4 to 224; the sequence is RIGIITFPGT…YSVLDGVLAG (221 aa). Catalysis depends on C87, which acts as the Nucleophile. Catalysis depends on residues H195 and E197.

As to quaternary structure, part of the FGAM synthase complex composed of 1 PurL, 1 PurQ and 2 PurS subunits.

It localises to the cytoplasm. The catalysed reaction is N(2)-formyl-N(1)-(5-phospho-beta-D-ribosyl)glycinamide + L-glutamine + ATP + H2O = 2-formamido-N(1)-(5-O-phospho-beta-D-ribosyl)acetamidine + L-glutamate + ADP + phosphate + H(+). The enzyme catalyses L-glutamine + H2O = L-glutamate + NH4(+). Its pathway is purine metabolism; IMP biosynthesis via de novo pathway; 5-amino-1-(5-phospho-D-ribosyl)imidazole from N(2)-formyl-N(1)-(5-phospho-D-ribosyl)glycinamide: step 1/2. Its function is as follows. Part of the phosphoribosylformylglycinamidine synthase complex involved in the purines biosynthetic pathway. Catalyzes the ATP-dependent conversion of formylglycinamide ribonucleotide (FGAR) and glutamine to yield formylglycinamidine ribonucleotide (FGAM) and glutamate. The FGAM synthase complex is composed of three subunits. PurQ produces an ammonia molecule by converting glutamine to glutamate. PurL transfers the ammonia molecule to FGAR to form FGAM in an ATP-dependent manner. PurS interacts with PurQ and PurL and is thought to assist in the transfer of the ammonia molecule from PurQ to PurL. This chain is Phosphoribosylformylglycinamidine synthase subunit PurQ, found in Mycolicibacterium paratuberculosis (strain ATCC BAA-968 / K-10) (Mycobacterium paratuberculosis).